A 390-amino-acid chain; its full sequence is Formate-dependent phosphoribosylglycinamide formyltransferase (390 aa).

N(1)-(5-phospho-beta-D-ribosyl)glycinamide-binding positions include 18 to 19 (EL) and glutamate 78. ATP contacts are provided by residues arginine 110, lysine 151, 156–161 (SSGKGQ), 191–194 (EEFL), and glutamate 199. The ATP-grasp domain maps to 115–305 (DLASKELNIK…EFELHLRAFL (191 aa)). The Mg(2+) site is built by glutamate 264 and glutamate 276. N(1)-(5-phospho-beta-D-ribosyl)glycinamide contacts are provided by residues aspartate 283, lysine 353, and 360 to 361 (RR).

Belongs to the PurK/PurT family. As to quaternary structure, homodimer.

It carries out the reaction N(1)-(5-phospho-beta-D-ribosyl)glycinamide + formate + ATP = N(2)-formyl-N(1)-(5-phospho-beta-D-ribosyl)glycinamide + ADP + phosphate + H(+). The protein operates within purine metabolism; IMP biosynthesis via de novo pathway; N(2)-formyl-N(1)-(5-phospho-D-ribosyl)glycinamide from N(1)-(5-phospho-D-ribosyl)glycinamide (formate route): step 1/1. In terms of biological role, involved in the de novo purine biosynthesis. Catalyzes the transfer of formate to 5-phospho-ribosyl-glycinamide (GAR), producing 5-phospho-ribosyl-N-formylglycinamide (FGAR). Formate is provided by PurU via hydrolysis of 10-formyl-tetrahydrofolate. This chain is Formate-dependent phosphoribosylglycinamide formyltransferase, found in Prochlorococcus marinus subsp. pastoris (strain CCMP1986 / NIES-2087 / MED4).